The sequence spans 357 residues: Mannonate dehydratase (357 aa).

Belongs to the mannonate dehydratase family. The cofactor is Fe(2+). Requires Mn(2+) as cofactor.

It catalyses the reaction D-mannonate = 2-dehydro-3-deoxy-D-gluconate + H2O. The protein operates within carbohydrate metabolism; pentose and glucuronate interconversion. Catalyzes the dehydration of D-mannonate. This chain is Mannonate dehydratase, found in Sorangium cellulosum (strain So ce56) (Polyangium cellulosum (strain So ce56)).